Reading from the N-terminus, the 464-residue chain is ATP synthase subunit beta (464 aa).

Glycine 151–threonine 158 contacts ATP.

This sequence belongs to the ATPase alpha/beta chains family. F-type ATPases have 2 components, CF(1) - the catalytic core - and CF(0) - the membrane proton channel. CF(1) has five subunits: alpha(3), beta(3), gamma(1), delta(1), epsilon(1). CF(0) has three main subunits: a(1), b(2) and c(9-12). The alpha and beta chains form an alternating ring which encloses part of the gamma chain. CF(1) is attached to CF(0) by a central stalk formed by the gamma and epsilon chains, while a peripheral stalk is formed by the delta and b chains.

Its subcellular location is the cell membrane. The catalysed reaction is ATP + H2O + 4 H(+)(in) = ADP + phosphate + 5 H(+)(out). Its function is as follows. Produces ATP from ADP in the presence of a proton gradient across the membrane. The catalytic sites are hosted primarily by the beta subunits. The sequence is that of ATP synthase subunit beta from Bacillus cytotoxicus (strain DSM 22905 / CIP 110041 / 391-98 / NVH 391-98).